Here is a 1700-residue protein sequence, read N- to C-terminus: Probable serine/threonine-protein kinase ifkC (1700 aa).

The interval M1–A25 is disordered. The segment covering Q14–A23 has biased composition (pro residues). In terms of domain architecture, RWD spans M74–N197. Over residues G454 to E463 the composition is skewed to polar residues. The tract at residues G454 to S488 is disordered. Residues G466–S477 are compositionally biased toward gly residues. The segment covering Q479–S488 has biased composition (polar residues). The Protein kinase domain occupies F494–M1027. Residues L500–V508 and K523 each bind ATP. Disordered regions lie at residues L568–D639 and G689–K760. The segment covering N572–D639 has biased composition (acidic residues). A compositionally biased stretch (low complexity) spans S697 to K735. Positions S736–S752 are enriched in basic residues. D822 serves as the catalytic Proton acceptor. 4 stretches are compositionally biased toward low complexity: residues T850–S875, N1135–S1158, S1230–S1240, and N1509–N1531. 4 disordered regions span residues T850 to G901, F1134 to V1160, K1216 to T1253, and N1507 to N1531.

The protein belongs to the protein kinase superfamily. Ser/Thr protein kinase family. GCN2 subfamily.

It carries out the reaction L-seryl-[protein] + ATP = O-phospho-L-seryl-[protein] + ADP + H(+). The catalysed reaction is L-threonyl-[protein] + ATP = O-phospho-L-threonyl-[protein] + ADP + H(+). This Dictyostelium discoideum (Social amoeba) protein is Probable serine/threonine-protein kinase ifkC (ifkC).